The sequence spans 459 residues: Plasma alpha-L-fucosidase (459 aa).

Residues 1–23 form the signal peptide; that stretch reads MRLGLLMFLPLLLLATRYRAVTA. N-linked (GlcNAc...) asparagine glycosylation is found at asparagine 163 and asparagine 231. At serine 293 the chain carries Phosphoserine. An N-linked (GlcNAc...) asparagine glycan is attached at asparagine 369.

Belongs to the glycosyl hydrolase 29 family. In terms of assembly, homotetramer.

Its subcellular location is the secreted. It carries out the reaction an alpha-L-fucoside + H2O = L-fucose + an alcohol. Functionally, alpha-L-fucosidase is responsible for hydrolyzing the alpha-1,6-linked fucose joined to the reducing-end N-acetylglucosamine of the carbohydrate moieties of glycoproteins. In Rattus norvegicus (Rat), this protein is Plasma alpha-L-fucosidase (Fuca2).